We begin with the raw amino-acid sequence, 728 residues long: Glutamate--cysteine ligase (728 aa).

The interval Pro517 to Val552 is disordered. The span at Arg523–Thr536 shows a compositional bias: low complexity.

Belongs to the glutamate--cysteine ligase type 3 family.

It catalyses the reaction L-cysteine + L-glutamate + ATP = gamma-L-glutamyl-L-cysteine + ADP + phosphate + H(+). It functions in the pathway sulfur metabolism; glutathione biosynthesis; glutathione from L-cysteine and L-glutamate: step 1/2. The sequence is that of Glutamate--cysteine ligase (gcs-1) from Neurospora crassa (strain ATCC 24698 / 74-OR23-1A / CBS 708.71 / DSM 1257 / FGSC 987).